Here is a 623-residue protein sequence, read N- to C-terminus: Protein Atg16l2 (623 aa).

Basic and acidic residues predominate over residues 64–79 (PKDAISTRHEDWREEV). A disordered region spans residues 64–93 (PKDAISTRHEDWREEVSGTGPDQVSSPASL). Positions 116–229 (VKKSAALDTL…ANQALVSQEL (114 aa)) form a coiled coil. WD repeat units follow at residues 338-377 (AHLS…LEAN), 382-421 (GAGG…SKET), 424-458 (GHKD…LGRA), 459-502 (YCSR…CIQV), 504-543 (PVQG…IRQV), 550-589 (KCSS…LETS), and 593-623 (PHCT…VLWH).

This sequence belongs to the WD repeat ATG16 family. In terms of assembly, homooligomer. Heterooligomer with ATG16L2. Interacts with ATG5. Self-oligomerizes to form a 800-kDa complex composed of ATG12-ATG5 and ATG16L2. Interacts with RAB33B. In terms of tissue distribution, widely expressed.

It is found in the cytoplasm. The protein resides in the cytosol. In terms of biological role, may play a role in regulating epithelial homeostasis in an ATG16L1-dependent manner. This chain is Protein Atg16l2 (Atg16l2), found in Mus musculus (Mouse).